We begin with the raw amino-acid sequence, 390 residues long: Alpha-2B adrenergic receptor (390 aa).

A helical membrane pass occupies residues 1-25 (AIATVITFLILFTIFGNSLVILAVL). Residues 26–36 (TSRSLRAPQNL) lie on the Cytoplasmic side of the membrane. Residues 37–62 (FLVSLAAADIMVATLIIPFSLANELL) form a helical membrane-spanning segment. Over 63–72 (GYWYFRRTWC) the chain is Extracellular. Cys72 and Cys151 are joined by a disulfide. Residues 73–95 (EVYLALDVLFCTSSIVHLCAISL) form a helical membrane-spanning segment. The Cytoplasmic segment spans residues 96 to 117 (DRYWAVSRALEYNSKRTPRRIK). The helical transmembrane segment at 118–140 (CIILTVWLIAAAISLPPLIYKGD) threads the bilayer. At 141-156 (QGPQPRGRPQCKLNQE) the chain is on the extracellular side. Residues 157 to 180 (AWYILSSSIGSFFAPCLIMILVYL) traverse the membrane as a helical segment. Over 181 to 354 (RIYLIAKRSH…LTREKRFTFV (174 aa)) the chain is Cytoplasmic. 2 disordered regions span residues 191 to 218 (RRGP…PSAL) and 233 to 311 (EANG…PLQQ). The segment covering 280 to 292 (LEEEADKEEEEEC) has biased composition (acidic residues). Residues 355-378 (LAVVIGVFVLCWFPFFFSYSLGAI) traverse the membrane as a helical segment. Residues 379 to 390 (CPQHCKVPHGLF) lie on the Extracellular side of the membrane.

This sequence belongs to the G-protein coupled receptor 1 family. Adrenergic receptor subfamily. ADRA2B sub-subfamily. As to quaternary structure, interacts with RAB26. Interacts with PPP1R9B. Interacts with GGA1, GGA2 and GGA3.

The protein localises to the cell membrane. In terms of biological role, alpha-2 adrenergic receptors mediate the catecholamine-induced inhibition of adenylate cyclase through the action of G proteins. The sequence is that of Alpha-2B adrenergic receptor (ADRA2B) from Dugong dugon (Dugong).